The following is a 174-amino-acid chain: Protein FanG (174 aa).

A signal peptide spans 1 to 21 (MKKLYKAITVICILMSNLQSA). A disulfide bridge links cysteine 41 with cysteine 75.

The protein resides in the fimbrium. In terms of biological role, involved in the biosynthesis of K99 fimbriae. The protein is Protein FanG (fanG) of Escherichia coli.